A 441-amino-acid chain; its full sequence is Tubulin beta-1 chain (441 aa).

The GTP site is built by Q11, E69, S138, G142, T143, G144, N204, and N226. E69 provides a ligand contact to Mg(2+).

It belongs to the tubulin family. Dimer of alpha and beta chains. A typical microtubule is a hollow water-filled tube with an outer diameter of 25 nm and an inner diameter of 15 nM. Alpha-beta heterodimers associate head-to-tail to form protofilaments running lengthwise along the microtubule wall with the beta-tubulin subunit facing the microtubule plus end conferring a structural polarity. Microtubules usually have 13 protofilaments but different protofilament numbers can be found in some organisms and specialized cells. It depends on Mg(2+) as a cofactor. As to expression, expressed primarily in touch receptor neurons.

Its subcellular location is the cytoplasm. It is found in the cytoskeleton. In terms of biological role, tubulin is the major constituent of microtubules, a cylinder consisting of laterally associated linear protofilaments composed of alpha- and beta-tubulin heterodimers. Microtubules grow by the addition of GTP-tubulin dimers to the microtubule end, where a stabilizing cap forms. Below the cap, tubulin dimers are in GDP-bound state, owing to GTPase activity of alpha-tubulin. Plays a role in mechanosensory transduction (touch sensitivity). Functionally, mec-7 beta-tubulin is required for the production of 15-protofilament microtubules. The sequence is that of Tubulin beta-1 chain (mec-7) from Caenorhabditis briggsae.